The primary structure comprises 205 residues: MEINYGLYLITDRRFLKGRQLKKVVEDAILGGVTIVQVREKDVSTREFYNVAKEVKEVTDYYKVPIIINDRLDIAQAIDANGVHLGQKDMHLNIAREILGKDKIIGISVGNVKEALEAQNNGADYLGIGTIFPTGSKKDVDAIIGIDGLSKIKDSISIPSVAIGGINKTNFKDVLKTGIEGISVISAILDEDDIKLAANNLLINK.

4-amino-2-methyl-5-(diphosphooxymethyl)pyrimidine is bound by residues Gln37 to Lys41 and Asn69. Positions 70 and 89 each coordinate Mg(2+). Residue Ser108 coordinates 4-amino-2-methyl-5-(diphosphooxymethyl)pyrimidine. Position 134-136 (Thr134–Ser136) interacts with 2-[(2R,5Z)-2-carboxy-4-methylthiazol-5(2H)-ylidene]ethyl phosphate. Lys137 contacts 4-amino-2-methyl-5-(diphosphooxymethyl)pyrimidine. 2-[(2R,5Z)-2-carboxy-4-methylthiazol-5(2H)-ylidene]ethyl phosphate is bound by residues Gly165 and Ile185–Ser186.

Belongs to the thiamine-phosphate synthase family. It depends on Mg(2+) as a cofactor.

The catalysed reaction is 2-[(2R,5Z)-2-carboxy-4-methylthiazol-5(2H)-ylidene]ethyl phosphate + 4-amino-2-methyl-5-(diphosphooxymethyl)pyrimidine + 2 H(+) = thiamine phosphate + CO2 + diphosphate. It catalyses the reaction 2-(2-carboxy-4-methylthiazol-5-yl)ethyl phosphate + 4-amino-2-methyl-5-(diphosphooxymethyl)pyrimidine + 2 H(+) = thiamine phosphate + CO2 + diphosphate. The enzyme catalyses 4-methyl-5-(2-phosphooxyethyl)-thiazole + 4-amino-2-methyl-5-(diphosphooxymethyl)pyrimidine + H(+) = thiamine phosphate + diphosphate. It participates in cofactor biosynthesis; thiamine diphosphate biosynthesis; thiamine phosphate from 4-amino-2-methyl-5-diphosphomethylpyrimidine and 4-methyl-5-(2-phosphoethyl)-thiazole: step 1/1. In terms of biological role, condenses 4-methyl-5-(beta-hydroxyethyl)thiazole monophosphate (THZ-P) and 2-methyl-4-amino-5-hydroxymethyl pyrimidine pyrophosphate (HMP-PP) to form thiamine monophosphate (TMP). The polypeptide is Thiamine-phosphate synthase (Clostridium botulinum (strain Loch Maree / Type A3)).